The chain runs to 1044 residues: Unconventional myosin-Ic (1044 aa).

The Myosin motor domain occupies 28 to 712 (GVQDFVLLEN…TLFATEDSLE (685 aa)). Residues Asn-69, Tyr-77, 120 to 129 (SGESGAGKTE), and 173 to 177 (NDNSS) contribute to the ATP site. The residue at position 364 (Lys-364) is an N6-methyllysine. Ser-389 is modified (phosphoserine). Lys-467 is modified (N6-acetyllysine). Ser-517 bears the Phosphoserine mark. The interval 589–611 (LLQLVEILRSKEPAYIRCIKPND) is actin-binding. IQ domains follow at residues 715–744 (RQSL…SAIC) and 738–767 (VKRS…AAQT). Phosphoserine occurs at positions 845 and 1022. The TH1 domain occupies 866–1040 (KDNYPQSVPR…NGHLAVVAPR (175 aa)).

This sequence belongs to the TRAFAC class myosin-kinesin ATPase superfamily. Myosin family. As to quaternary structure, interacts (via its IQ motifs) with CABP1 and CIB1; the interaction with CABP1 and CIB1 is calcium-dependent. Interacts (via tail domain) with PLEKHB1 (via PH domain); the interaction is not affected by the presence or absence of calcium and CALM. Interacts with POLR1A. Interacts with POLR2A. Component of the B-WICH complex, at least composed of SMARCA5/SNF2H, BAZ1B/WSTF, SF3B1, DEK, MYO1C, ERCC6, MYBBP1A and DDX21. Interacts (via its IQ motifs) with CALM; this precludes interaction with YWHAB. Interacts with YWHAB; this precludes interaction with CALM. Interacts with RPS6. Interacts with actin. Interacts with LLPH. Interacts with GLUT4. Interacts (via its IQ motifs) with SH3BGRL3; the interaction is dependent on calcium and takes place at membrane ruffles.

It localises to the cytoplasm. Its subcellular location is the nucleus. The protein resides in the cell cortex. The protein localises to the cell projection. It is found in the stereocilium membrane. It localises to the cytoplasmic vesicle. Its subcellular location is the ruffle membrane. Functionally, myosins are actin-based motor molecules with ATPase activity. Unconventional myosins serve in intracellular movements. Their highly divergent tails are presumed to bind to membranous compartments, which would be moved relative to actin filaments. Involved in glucose transporter recycling in response to insulin by regulating movement of intracellular GLUT4-containing vesicles to the plasma membrane. Component of the hair cell's (the sensory cells of the inner ear) adaptation-motor complex. Acts as a mediator of adaptation of mechanoelectrical transduction in stereocilia of vestibular hair cells. Binds phosphoinositides and links the actin cytoskeleton to cellular membranes. This Rattus norvegicus (Rat) protein is Unconventional myosin-Ic (Myo1c).